The sequence spans 258 residues: Ubiquinone/menaquinone biosynthesis C-methyltransferase UbiE (258 aa).

Residues 1–21 (MPESRTSADGGMETSYGFREV) form a disordered region. S-adenosyl-L-methionine contacts are provided by residues Thr81, Asp102, and 130–131 (NA).

This sequence belongs to the class I-like SAM-binding methyltransferase superfamily. MenG/UbiE family.

The enzyme catalyses a 2-demethylmenaquinol + S-adenosyl-L-methionine = a menaquinol + S-adenosyl-L-homocysteine + H(+). The catalysed reaction is a 2-methoxy-6-(all-trans-polyprenyl)benzene-1,4-diol + S-adenosyl-L-methionine = a 5-methoxy-2-methyl-3-(all-trans-polyprenyl)benzene-1,4-diol + S-adenosyl-L-homocysteine + H(+). The protein operates within quinol/quinone metabolism; menaquinone biosynthesis; menaquinol from 1,4-dihydroxy-2-naphthoate: step 2/2. It participates in cofactor biosynthesis; ubiquinone biosynthesis. In terms of biological role, methyltransferase required for the conversion of demethylmenaquinol (DMKH2) to menaquinol (MKH2) and the conversion of 2-polyprenyl-6-methoxy-1,4-benzoquinol (DDMQH2) to 2-polyprenyl-3-methyl-6-methoxy-1,4-benzoquinol (DMQH2). The polypeptide is Ubiquinone/menaquinone biosynthesis C-methyltransferase UbiE (Rhizobium leguminosarum bv. trifolii (strain WSM2304)).